The primary structure comprises 346 residues: NADH-ubiquinone oxidoreductase chain 2 (346 aa).

11 helical membrane-spanning segments follow: residues 1 to 21 (MNPH…TITI), 25 to 45 (HWVL…PLIS), 60 to 80 (FLTQ…NAWA), 95 to 115 (CLLL…HFWF), 124 to 144 (LMTA…LLLM), 149 to 169 (LNPA…GWMG), 178 to 195 (ILAF…IILV), 200 to 219 (LALL…FMAL), 242 to 262 (ATLM…GFMP), 274 to 294 (EMTP…FFYL), and 326 to 346 (AILA…HAIV).

The protein belongs to the complex I subunit 2 family.

The protein localises to the mitochondrion inner membrane. The enzyme catalyses a ubiquinone + NADH + 5 H(+)(in) = a ubiquinol + NAD(+) + 4 H(+)(out). Its function is as follows. Core subunit of the mitochondrial membrane respiratory chain NADH dehydrogenase (Complex I) that is believed to belong to the minimal assembly required for catalysis. Complex I functions in the transfer of electrons from NADH to the respiratory chain. The immediate electron acceptor for the enzyme is believed to be ubiquinone. The polypeptide is NADH-ubiquinone oxidoreductase chain 2 (MT-ND2) (Sibirionetta formosa (Baikal teal)).